A 438-amino-acid polypeptide reads, in one-letter code: MISLRHTALGLALSLAFTGQALAVTTIPFWHSMEGELGKEVDSLAQRFNQANPDYKIVPVYKGNYEQNLSAGIAAFRTGNAPAILQVYEVGTATMMASKAIKPVYEVFKDAGINFDESQFVPTVAGYYTDAKSGHLLSQPFNSSTPVLYYNKDAFKKAGLDPEQPPKTWQELADYTAKLRAAGMKCGYASGWQGWIQLENFSAWNGLPFASKNNGFDGTDAVLEFNKPEQVKHIALLEEMNKKGDFSYVGRKDESTEKFYNGDCAMTTASSGSLANIRQYAKFNYGVGMMPYDADIKGAPQNAIIGGASLWVMQGKYKETYTGVAKFLDFLAKPENAAEWHQKTGYLPITTAAYELTREQGYYDKNPGADIATRQMLNKPPLPFTKGLRLGNMPQIRTIVDEELESVWTGKKTPQQALDTAVERGNQLLRRFEKASKS.

The first 23 residues, 1–23 (MISLRHTALGLALSLAFTGQALA), serve as a signal peptide directing secretion. Positions 65, 89, 144, 270, 307, 346, and 397 each coordinate sn-glycerol 3-phosphate.

This sequence belongs to the bacterial solute-binding protein 1 family. The complex is composed of two ATP-binding proteins (UgpC), two transmembrane proteins (UgpA and UgpE) and a solute-binding protein (UgpB).

The protein localises to the periplasm. Part of the ABC transporter complex UgpBAEC involved in sn-glycerol-3-phosphate (G3P) import. Binds G3P. The sequence is that of sn-glycerol-3-phosphate-binding periplasmic protein UgpB (ugpB) from Salmonella paratyphi A (strain ATCC 9150 / SARB42).